Consider the following 173-residue polypeptide: Small ribosomal subunit protein uS5 (173 aa).

One can recognise an S5 DRBM domain in the interval 17-80 (LREKMIAVNR…EEARRNMVKV (64 aa)).

The protein belongs to the universal ribosomal protein uS5 family. Part of the 30S ribosomal subunit. Contacts proteins S4 and S8.

In terms of biological role, with S4 and S12 plays an important role in translational accuracy. Functionally, located at the back of the 30S subunit body where it stabilizes the conformation of the head with respect to the body. This is Small ribosomal subunit protein uS5 from Acidovorax sp. (strain JS42).